The following is a 231-amino-acid chain: Septum site-determining protein MinC (231 aa).

The protein belongs to the MinC family. In terms of assembly, interacts with MinD and FtsZ.

Its function is as follows. Cell division inhibitor that blocks the formation of polar Z ring septums. Rapidly oscillates between the poles of the cell to destabilize FtsZ filaments that have formed before they mature into polar Z rings. Prevents FtsZ polymerization. This chain is Septum site-determining protein MinC, found in Shigella flexneri.